Reading from the N-terminus, the 129-residue chain is Serum amyloid A protein (129 aa).

The N-terminal stretch at 1–18 is a signal peptide; sequence MKLFTGLVFCSLVLGVSS. Residue Gln-19 is modified to Pyrrolidone carboxylic acid. The disordered stretch occupies residues 88-129; the sequence is FFRHGNSGHGAEDSKADQAANEWGRSGKDPNHFRPAGLPSKY. Residues 112 to 129 constitute a propeptide, often cleaved during amyloidogenesis; it reads RSGKDPNHFRPAGLPSKY.

The protein belongs to the SAA family. In terms of tissue distribution, expressed by the liver; secreted in plasma.

Its subcellular location is the secreted. Major acute phase reactant. Apolipoprotein of the HDL complex. The polypeptide is Serum amyloid A protein (SAA1) (Felis catus (Cat)).